The sequence spans 302 residues: Bacteriochlorophyll synthase 33 kDa chain (302 aa).

The next 9 helical transmembrane spans lie at 25–45, 49–69, 97–117, 119–139, 145–165, 166–186, 223–243, 246–266, and 275–295; these read ITWFPPIWAYLCGTVSVGIWP, WPLVLLGMVLAGPLVCGMSQA, WGLYIALLMTVLSLAVGWMLG, WGFGATVFGVLAAWAYSVEPI, GWWGPGLVALCYEGLPWFTGA, AVLSAGAPSFFIVTVALLYAF, LACTVMAMAQILVITLLVIWG, IHAGIITALLVAQLFAMRVLL, and WYNGTGVTLYVLGMMVAAFAI.

It is found in the cell membrane. It functions in the pathway porphyrin-containing compound metabolism; bacteriochlorophyll biosynthesis (light-independent). Catalyzes the esterification of bacteriochlorophyllide a by geranylgeraniol-PPi. This chain is Bacteriochlorophyll synthase 33 kDa chain (bchG), found in Cereibacter sphaeroides (strain ATCC 17023 / DSM 158 / JCM 6121 / CCUG 31486 / LMG 2827 / NBRC 12203 / NCIMB 8253 / ATH 2.4.1.) (Rhodobacter sphaeroides).